The following is an 860-amino-acid chain: Paladin (860 aa).

The segment at 1-24 (MGTTASAAPQATLHERLHSDSMTD) is disordered. The N-myristoyl glycine moiety is linked to residue Gly-2. The span at 13–24 (LHERLHSDSMTD) shows a compositional bias: basic and acidic residues.

Belongs to the paladin family.

It localises to the cytoplasm. The protein localises to the cytosol. In Danio rerio (Zebrafish), this protein is Paladin (pald1).